A 215-amino-acid polypeptide reads, in one-letter code: ATP-dependent Clp protease proteolytic subunit (215 aa).

The Nucleophile role is filled by serine 111. Histidine 136 is an active-site residue.

This sequence belongs to the peptidase S14 family. In terms of assembly, fourteen ClpP subunits assemble into 2 heptameric rings which stack back to back to give a disk-like structure with a central cavity, resembling the structure of eukaryotic proteasomes.

It localises to the cytoplasm. The enzyme catalyses Hydrolysis of proteins to small peptides in the presence of ATP and magnesium. alpha-casein is the usual test substrate. In the absence of ATP, only oligopeptides shorter than five residues are hydrolyzed (such as succinyl-Leu-Tyr-|-NHMec, and Leu-Tyr-Leu-|-Tyr-Trp, in which cleavage of the -Tyr-|-Leu- and -Tyr-|-Trp bonds also occurs).. Cleaves peptides in various proteins in a process that requires ATP hydrolysis. Has a chymotrypsin-like activity. Plays a major role in the degradation of misfolded proteins. The chain is ATP-dependent Clp protease proteolytic subunit from Hamiltonella defensa subsp. Acyrthosiphon pisum (strain 5AT).